The chain runs to 472 residues: Cell division protein FtsP (472 aa).

Positions 1-27 (MSLSRRQFIQASGIALCAGAMPLTARA) form a signal peptide, tat-type signal.

The protein belongs to the FtsP family. In terms of processing, predicted to be exported by the Tat system. The position of the signal peptide cleavage has not been experimentally proven.

It is found in the periplasm. Cell division protein that is required for growth during stress conditions. May be involved in protecting or stabilizing the divisomal assembly under conditions of stress. This chain is Cell division protein FtsP, found in Dickeya dadantii (strain 3937) (Erwinia chrysanthemi (strain 3937)).